The chain runs to 318 residues: NADH-ubiquinone oxidoreductase chain 1 (318 aa).

Transmembrane regions (helical) follow at residues 2 to 22 (FMINIACLIIPILLAVAFLTL), 69 to 89 (LLFTVAPTLALTLALTMWLPL), 100 to 120 (LGVLFILAISSLAVYSILWSG), 146 to 166 (LAIILLSVLLMSGSFTLTNLI), 171 to 191 (HMWLIIPTWPLAMMWFISTLA), 231 to 251 (IMMMNALTTLLFLGALHTPLV), 253 to 273 (GIYTANFVLKTLILTIMFLWI), and 285 to 305 (LMHLLWKNFLPLTLAMLMWHV).

It belongs to the complex I subunit 1 family. As to quaternary structure, core subunit of respiratory chain NADH dehydrogenase (Complex I) which is composed of 45 different subunits.

The protein resides in the mitochondrion inner membrane. It carries out the reaction a ubiquinone + NADH + 5 H(+)(in) = a ubiquinol + NAD(+) + 4 H(+)(out). In terms of biological role, core subunit of the mitochondrial membrane respiratory chain NADH dehydrogenase (Complex I) which catalyzes electron transfer from NADH through the respiratory chain, using ubiquinone as an electron acceptor. Essential for the catalytic activity and assembly of complex I. The polypeptide is NADH-ubiquinone oxidoreductase chain 1 (MT-ND1) (Myrmecophaga tridactyla (Giant anteater)).